The primary structure comprises 960 residues: FYVE, RhoGEF and PH domain-containing protein 1 (960 aa).

Disordered stretches follow at residues 1–210 and 226–355; these read MHGH…SSAA and ASDR…REIP. S48 is modified (phosphoserine). The segment covering 125-135 has biased composition (basic and acidic residues); it reads PHPEGPQRLRS. Pro residues-rich tracts occupy residues 137–149, 156–165, and 173–190; these read PGPPTEIPGPRPS, GPKPQVPPKP, and VLPPPEPIPPPPSRPLPA. Residues 171–187 carry the SH3-binding motif; sequence PRVLPPPEPIPPPPSRP. The residue at position 205 (S205) is a Phosphoserine. Pro residues predominate over residues 231-251; it reads APGPCPVPPEPAMLPQPPPQP. Over residues 273–284 the composition is skewed to basic and acidic residues; sequence RDGEKVPNRDSG. Positions 285–294 are enriched in low complexity; the sequence is IDSISSPSNS. Over residues 335 to 350 the composition is skewed to acidic residues; that stretch reads VDSDLEEEEEEEEEEK. The region spanning 372-560 is the DH domain; the sequence is KVFHIANELL…ATAAEHSNAA (189 aa). The 100-residue stretch at 589 to 688 folds into the PH 1 domain; sequence ELIKEGHILK…WVQAINSTLL (100 aa). The segment at 701-725 is disordered; that stretch reads NSTNRDDEDTPPNSPNVDLGKRAPT. A Phosphothreonine modification is found at T710. A Phosphoserine modification is found at S714. Residues 729–789 form an FYVE-type zinc finger; that stretch reads EKEVTMCMRC…VCTDCYVALH (61 aa). Residues C735, C738, C752, C755, C760, C763, C781, and C784 each coordinate Zn(2+). Residues 820–920 enclose the PH 2 domain; the sequence is NSVICSFLHY…WMAVLGRAGR (101 aa). A disordered region spans residues 922-960; sequence DTFCPGPTLSEDKEMEETPVAASGATAEPPEASQTRDKT.

As to quaternary structure, interacts with DBNL/ABP1 and CTTN. Binds CDC42. May interact with CCPG1.

It localises to the cytoplasm. The protein localises to the cell projection. The protein resides in the lamellipodium. It is found in the ruffle. Its subcellular location is the cytoskeleton. Its function is as follows. Activates CDC42, a member of the Ras-like family of Rho- and Rac proteins, by exchanging bound GDP for free GTP. Plays a role in regulating the actin cytoskeleton and cell shape. This Mus musculus (Mouse) protein is FYVE, RhoGEF and PH domain-containing protein 1 (Fgd1).